The chain runs to 111 residues: uncharacterized protein (111 aa).

A disordered region spans residues 43–72 (NGRAEETEADAPLPEEPSLPDLPDLSDLDS). Low complexity predominate over residues 61–72 (LPDLPDLSDLDS).

This is an uncharacterized protein from Homo sapiens (Human).